A 278-amino-acid polypeptide reads, in one-letter code: 3-methyl-2-oxobutanoate hydroxymethyltransferase (278 aa).

Mg(2+) contacts are provided by D43 and D82. 3-methyl-2-oxobutanoate is bound by residues 43–44, D82, and K112; that span reads DS. A Mg(2+)-binding site is contributed by E114. E181 acts as the Proton acceptor in catalysis.

This sequence belongs to the PanB family. In terms of assembly, homodecamer; pentamer of dimers. Mg(2+) serves as cofactor.

The protein resides in the cytoplasm. It catalyses the reaction 3-methyl-2-oxobutanoate + (6R)-5,10-methylene-5,6,7,8-tetrahydrofolate + H2O = 2-dehydropantoate + (6S)-5,6,7,8-tetrahydrofolate. Its pathway is cofactor biosynthesis; (R)-pantothenate biosynthesis; (R)-pantoate from 3-methyl-2-oxobutanoate: step 1/2. In terms of biological role, catalyzes the reversible reaction in which hydroxymethyl group from 5,10-methylenetetrahydrofolate is transferred onto alpha-ketoisovalerate to form ketopantoate. This is 3-methyl-2-oxobutanoate hydroxymethyltransferase from Bacillus cereus (strain B4264).